A 314-amino-acid chain; its full sequence is tRNA pseudouridine synthase B (314 aa).

Asp47 acts as the Nucleophile in catalysis.

This sequence belongs to the pseudouridine synthase TruB family. Type 1 subfamily.

It catalyses the reaction uridine(55) in tRNA = pseudouridine(55) in tRNA. Its function is as follows. Responsible for synthesis of pseudouridine from uracil-55 in the psi GC loop of transfer RNAs. This Vibrio campbellii (strain ATCC BAA-1116) protein is tRNA pseudouridine synthase B.